The chain runs to 529 residues: uncharacterized protein (529 aa).

Residues 13–129 (QTAMRKMRAL…LSTLCQEAQR (117 aa)) form the Arf-GAP domain. The segment at 28 to 51 (CFDCGARNPTWCTVTYGVFLCIDC) adopts a C4-type zinc-finger fold. The span at 291–301 (QMEAKVAKDPT) shows a compositional bias: basic and acidic residues. 4 disordered regions span residues 291–313 (QMEA…GMGG), 335–357 (VLTF…DDKY), 398–424 (KSRY…GASP), and 468–493 (FGSE…SDLK). Over residues 399–420 (SRYTASSSSSSTSRAPTTRLTA) the composition is skewed to low complexity. The span at 476 to 487 (NGSQQRQSSQVP) shows a compositional bias: polar residues.

Its function is as follows. GTPase-activating protein for the ADP ribosylation factor family. This is an uncharacterized protein from Caenorhabditis elegans.